A 239-amino-acid polypeptide reads, in one-letter code: Sugar fermentation stimulation protein homolog (239 aa).

Belongs to the SfsA family.

The sequence is that of Sugar fermentation stimulation protein homolog from Methylobacterium sp. (strain 4-46).